Consider the following 720-residue polypeptide: Putative fatty acid oxidation complex trifunctional enzyme (720 aa).

A 3-hydroxyacyl-CoA dehydrogenase region spans residues 1–384 (MQNEIKKVCV…SWKYGPFELL (384 aa)). Positions 453–720 (FVITTKMNCL…TIEKLKAIVK (268 aa)) are enoyl-CoA hydratase/isomerase.

This sequence in the N-terminal section; belongs to the 3-hydroxyacyl-CoA dehydrogenase family. The protein in the C-terminal section; belongs to the enoyl-CoA hydratase/isomerase family.

The catalysed reaction is a (3S)-3-hydroxyacyl-CoA + NAD(+) = a 3-oxoacyl-CoA + NADH + H(+). It carries out the reaction a (3S)-3-hydroxyacyl-CoA = a (2E)-enoyl-CoA + H2O. The enzyme catalyses a 4-saturated-(3S)-3-hydroxyacyl-CoA = a (3E)-enoyl-CoA + H2O. It catalyses the reaction a (3Z)-enoyl-CoA = a 4-saturated (2E)-enoyl-CoA. The catalysed reaction is a (3E)-enoyl-CoA = a 4-saturated (2E)-enoyl-CoA. The protein is Putative fatty acid oxidation complex trifunctional enzyme of Rickettsia felis (strain ATCC VR-1525 / URRWXCal2) (Rickettsia azadi).